Here is a 256-residue protein sequence, read N- to C-terminus: ATP synthase subunit a (256 aa).

Positions 1–7 (MLNLFIT) are cleaved as a propeptide — removed in mature form. 6 helical membrane passes run 33-53 (FTTF…LNLL), 92-112 (YFPL…ISMI), 122-142 (LIFI…IGLT), 148-168 (FFSL…LVLI), 188-208 (VLSG…LMSM), and 209-229 (SIIT…IVVL).

This sequence belongs to the ATPase A chain family. F-type ATPases have 2 components, CF(1) - the catalytic core - and CF(0) - the membrane proton channel. CF(1) has five subunits: alpha(3), beta(3), gamma(1), delta(1), epsilon(1). CF(0) has three main subunits: a, b and c.

It localises to the mitochondrion inner membrane. Mitochondrial membrane ATP synthase (F(1)F(0) ATP synthase or Complex V) produces ATP from ADP in the presence of a proton gradient across the membrane which is generated by electron transport complexes of the respiratory chain. F-type ATPases consist of two structural domains, F(1) - containing the extramembraneous catalytic core and F(0) - containing the membrane proton channel, linked together by a central stalk and a peripheral stalk. During catalysis, ATP synthesis in the catalytic domain of F(1) is coupled via a rotary mechanism of the central stalk subunits to proton translocation. Key component of the proton channel; it may play a direct role in the translocation of protons across the membrane. The polypeptide is ATP synthase subunit a (ATP6) (Kluyveromyces lactis (strain ATCC 8585 / CBS 2359 / DSM 70799 / NBRC 1267 / NRRL Y-1140 / WM37) (Yeast)).